The primary structure comprises 238 residues: Probable transcriptional regulatory protein Mmwyl1_2868 (238 aa).

This sequence belongs to the TACO1 family.

Its subcellular location is the cytoplasm. This is Probable transcriptional regulatory protein Mmwyl1_2868 from Marinomonas sp. (strain MWYL1).